Reading from the N-terminus, the 254-residue chain is MELHFNLELVETYKSNSQKARILTEDWVYRQSYCPNCGNNPLNHFENNRPVADFYCNHCSEEFELKSKKGNFSSTINDGAYATMMKRVQADNNPNFFFLTYTKNFEVNNFLVLPKQFVTPKSIIQRKPLAPTARRAGWIGCNIDLSQVPSKGRIFLVQDGQVRDPEKVTKEFKQGLFLRKSSLSSRGWTIEILNCIDKIEGSEFTLEDMYRFESDLKNIFVKNNHIKEKIRQQLQILRDKEIIEFKGRGKYRKL.

It belongs to the DpnI type II restriction endonuclease family.

The enzyme catalyses Endonucleolytic cleavage of DNA to give specific double-stranded fragments with terminal 5'-phosphates.. Functionally, an M and P subtype restriction enzyme that recognizes the double-stranded, methylated sequence 5'-G(Me)ATC-3' and cleaves after A-2. The polypeptide is Type II methyl-directed restriction enzyme DpnI (Streptococcus pneumoniae serotype 4 (strain ATCC BAA-334 / TIGR4)).